The sequence spans 353 residues: Sulfate/thiosulfate import ATP-binding protein CysA (353 aa).

The ABC transporter domain occupies 3 to 237 (IQVKNIEKHF…PATPFVFDFL (235 aa)). 35–42 (GPSGCGKT) contributes to the ATP binding site.

This sequence belongs to the ABC transporter superfamily. Sulfate/tungstate importer (TC 3.A.1.6) family. As to quaternary structure, the complex is composed of two ATP-binding proteins (CysA), two transmembrane proteins (CysT and CysW) and a solute-binding protein (CysP).

It is found in the cell inner membrane. The enzyme catalyses sulfate(out) + ATP + H2O = sulfate(in) + ADP + phosphate + H(+). It catalyses the reaction thiosulfate(out) + ATP + H2O = thiosulfate(in) + ADP + phosphate + H(+). Functionally, part of the ABC transporter complex CysAWTP involved in sulfate/thiosulfate import. Responsible for energy coupling to the transport system. The sequence is that of Sulfate/thiosulfate import ATP-binding protein CysA from Acinetobacter baylyi (strain ATCC 33305 / BD413 / ADP1).